The following is a 231-amino-acid chain: MIDVQHIDHSFTIGKKGRENEVPVLKDVSLSVAKGEIACIVGRSGSGKSTLLNLISGYISPTKGRIVINGTDVTGFNEKEWAQFRLDHFGFIFQSFQLIPGLTTYENVEMPLALKGIKPSERKQKVQDMLKRVGLENHAAHYPNELSGGQQQRVSIARALILNPSIILADEPTGSLDSETEHEVLELIQQLNRERGITFVIITHDDEVASIGHSKFQLHDGVLKGGITVEV.

The region spanning 4–231 (VQHIDHSFTI…VLKGGITVEV (228 aa)) is the ABC transporter domain. 42 to 49 (GRSGSGKS) lines the ATP pocket.

The protein belongs to the ABC transporter superfamily. The complex is composed of 2 ATP-binding proteins (YtrB and YtrE), 2 transmembrane proteins (YtrC and YtrD) and a solute-binding protein (YtrF).

The protein resides in the cell membrane. Its function is as follows. Part of the ABC transporter complex YtrBCDEF that plays a role in acetoin utilization during stationary phase and sporulation. The polypeptide is ABC transporter ATP-binding protein YtrE (ytrE) (Bacillus subtilis (strain 168)).